Reading from the N-terminus, the 303-residue chain is MNIKNEKIAVLYGGTSQEREVSLHSGAAVTEALKSLGYNVEGIDTKDIAIEKLKEKGIQRVFNILHGGIGENGVLQGALEQMGIPYTGCGVMASAITLDKFRTKLLWNAVGLPTADMVVVQRGQAIDINQIIAKLSLPVFVKPSSEGSSVGVFKVKTKEELLPAITAALEFDTIVLVEEFLTGAEYSVPVLDGEVLPAVQIIPDGEFYDYHAKYLSDKTQYIVPALTNERQAEVAKIVKAAYDVVGCRGWSRIDVMEDQNQNFRLVEVNTNPGMTSHSIFPKSAATMGISFEKLVERVLELSI.

One can recognise an ATP-grasp domain in the interval 104 to 300 (KLLWNAVGLP…FEKLVERVLE (197 aa)). 132–187 (IAKLSLPVFVKPSSEGSSVGVFKVKTKEELLPAITAALEFDTIVLVEEFLTGAEYS) is a binding site for ATP. Mg(2+) is bound by residues aspartate 254, glutamate 267, and asparagine 269.

Belongs to the D-alanine--D-alanine ligase family. It depends on Mg(2+) as a cofactor. Mn(2+) is required as a cofactor.

The protein resides in the cytoplasm. It carries out the reaction 2 D-alanine + ATP = D-alanyl-D-alanine + ADP + phosphate + H(+). It functions in the pathway cell wall biogenesis; peptidoglycan biosynthesis. Its function is as follows. Cell wall formation. In Haemophilus ducreyi (strain 35000HP / ATCC 700724), this protein is D-alanine--D-alanine ligase.